The sequence spans 322 residues: Eukaryotic translation initiation factor 3 subunit I (322 aa).

5 WD repeats span residues 4–43 (GHER…RLGT), 46–85 (GHQG…VIAS), 141–180 (MVES…KVVD), 184–223 (DHTA…CLKT), and 281–322 (GHFG…NIFE).

It belongs to the eIF-3 subunit I family. In terms of assembly, component of the eukaryotic translation initiation factor 3 (eIF-3) complex. The eIF-3 complex interacts with pix.

The protein resides in the cytoplasm. Functionally, component of the eukaryotic translation initiation factor 3 (eIF-3) complex, which is involved in protein synthesis of a specialized repertoire of mRNAs and, together with other initiation factors, stimulates binding of mRNA and methionyl-tRNAi to the 40S ribosome. The eIF-3 complex specifically targets and initiates translation of a subset of mRNAs involved in cell proliferation. This chain is Eukaryotic translation initiation factor 3 subunit I, found in Drosophila mojavensis (Fruit fly).